A 125-amino-acid chain; its full sequence is MAIVAVGTEIVQCARIAQMIQQHGEQFLERVFTAAEIDHCAQRPDATGHFSRRWAAKQAVFKALRCHRRGVSWTDIEIATHPSEGPTIELHGIAADLAEEAEIDAIHLSLGGCRTQAIAYVVLCD.

Residues E9 and Q58 each coordinate Mg(2+).

The protein belongs to the P-Pant transferase superfamily. AcpS family. It depends on Mg(2+) as a cofactor.

Its subcellular location is the cytoplasm. The enzyme catalyses apo-[ACP] + CoA = holo-[ACP] + adenosine 3',5'-bisphosphate + H(+). In terms of biological role, transfers the 4'-phosphopantetheine moiety from coenzyme A to a Ser of acyl-carrier-protein. This chain is Holo-[acyl-carrier-protein] synthase, found in Rhodopirellula baltica (strain DSM 10527 / NCIMB 13988 / SH1).